The sequence spans 265 residues: Mlc titration factor A (265 aa).

Positions 111, 148, 152, and 211 each coordinate Zn(2+).

The protein belongs to the MtfA family. As to quaternary structure, interacts with Mlc. Requires Zn(2+) as cofactor.

The protein resides in the cytoplasm. Its function is as follows. Involved in the modulation of the activity of the glucose-phosphotransferase system (glucose-PTS). Interacts with the transcriptional repressor Mlc, preventing its interaction with DNA and leading to the modulation of expression of genes regulated by Mlc, including ptsG, which encodes the PTS system glucose-specific EIICB component. In terms of biological role, shows zinc-dependent metallopeptidase activity. The chain is Mlc titration factor A from Pectobacterium atrosepticum (strain SCRI 1043 / ATCC BAA-672) (Erwinia carotovora subsp. atroseptica).